The sequence spans 555 residues: Carboxylic ester hydrolase (555 aa).

The signal sequence occupies residues 1 to 19; it reads MELSVIALLLLGFVNFSWQ. Cysteines 86 and 107 form a disulfide. N-linked (GlcNAc...) asparagine glycans are attached at residues asparagine 120 and asparagine 144. Serine 211 serves as the catalytic Acyl-ester intermediate. Cysteine 263 and cysteine 274 are oxidised to a cystine. The active-site Charge relay system is glutamate 336. Residues asparagine 369 and asparagine 397 are each glycosylated (N-linked (GlcNAc...) asparagine). The active-site Charge relay system is the histidine 459. N-linked (GlcNAc...) asparagine glycans are attached at residues asparagine 473 and asparagine 533.

It belongs to the type-B carboxylesterase/lipase family. Post-translationally, N-glycosylated. Expressed in several tissues, including epidermis (at protein level), fat body (at protein level), gut (at protein level), muscle (at protein level), and venom gland (at protein level).

It localises to the secreted. It catalyses the reaction a carboxylic ester + H2O = an alcohol + a carboxylate + H(+). Lipolytic agent that may be involved in distributing the venom via degradation of blood triglycerides. The recombinant protein degrades triglycerides and exhibits high lipolytic activity toward long-chain triglycerides (tested on tributyrin, trioctanoin and triolein). Does not affect mammalian cells. The chain is Carboxylic ester hydrolase (vCaE) from Bombus ignitus (Bumblebee).